The chain runs to 448 residues: MGPKKQKRELPEDFDPVYPYDVPQLQINPPFVSGDGFNQSVDGVLSLHIAPPLVFDNTRALTLAFGGGLQLSGKQLVVATEGSGLTTNPDGKLVLKVKSPITLTAEGISLSLGPGLSNSETGLSLQVTAPLQFQGNALTLPLAAGLQNTDGGMGVKLGSGLTTDNSQAVTVQVGNGLQLNGEGQLTVPATAPLVSGSAGISFNYSSNDFVLDNDSLSLRPKAISVTPPLQSTEDTISLNYSNDFSVDNGALTLAPTFKPYTLWTGASPTANVILTNTTTPNGTFFLCLTRVGGLVLGSFALKSSIDLTSMTKKVNFIFDGAGRLQSDSTYKGRFGFRSNDSVIEPTAAGLSPAWLMPSTFIYPRNTSGSSLTSFVYINQTYVHVDIKVNTLSTNGYSLEFNFQNMSFSAPFSTSYGTFCYVPRRTTHRPRHGPFSLRERRHLFQLLQQ.

The protein belongs to the adenoviridae fiber family. As to quaternary structure, homotrimer. Interacts (via N-terminal tail region) with pentons.

The protein localises to the virion. It is found in the host nucleus. Functionally, forms spikes that protrude from each vertex of the icosahedral capsid. Interacts with host receptor to provide virion initial attachment to target cell. Fiber proteins are shed during virus entry, when virus is still at the cell surface. This is Fiber protein from Sus scrofa (Pig).